A 443-amino-acid polypeptide reads, in one-letter code: Squalene synthase (443 aa).

Transmembrane regions (helical) follow at residues 291–311 (TSFN…ELVF) and 423–443 (ILLL…VRII).

The protein belongs to the phytoene/squalene synthase family. The cofactor is Mg(2+).

The protein localises to the endoplasmic reticulum membrane. The enzyme catalyses 2 (2E,6E)-farnesyl diphosphate + NADPH + H(+) = squalene + 2 diphosphate + NADP(+). It catalyses the reaction 2 (2E,6E)-farnesyl diphosphate + NADH + H(+) = squalene + 2 diphosphate + NAD(+). It functions in the pathway terpene metabolism; lanosterol biosynthesis; lanosterol from farnesyl diphosphate: step 1/3. Its function is as follows. Catalyzes the condensation of 2 two farnesyl pyrophosphate moieties to form squalene. It is the first committed enzyme of the sterol biosynthesis pathway. Required for the biosynthesis of ergosterol. In Cyberlindnera jadinii (Torula yeast), this protein is Squalene synthase (ERG9).